We begin with the raw amino-acid sequence, 884 residues long: Valine--tRNA ligase (884 aa).

Positions 47-57 (PNVTGALHIGH) match the 'HIGH' region motif. A 'KMSKS' region motif is present at residues 525-529 (KMSKS). Residue Lys528 coordinates ATP. Residues 812–884 (AVDFEAELAR…QQRFRDAIGK (73 aa)) adopt a coiled-coil conformation.

Belongs to the class-I aminoacyl-tRNA synthetase family. ValS type 1 subfamily. As to quaternary structure, monomer.

The protein localises to the cytoplasm. The catalysed reaction is tRNA(Val) + L-valine + ATP = L-valyl-tRNA(Val) + AMP + diphosphate. Functionally, catalyzes the attachment of valine to tRNA(Val). As ValRS can inadvertently accommodate and process structurally similar amino acids such as threonine, to avoid such errors, it has a 'posttransfer' editing activity that hydrolyzes mischarged Thr-tRNA(Val) in a tRNA-dependent manner. This is Valine--tRNA ligase from Nitratidesulfovibrio vulgaris (strain ATCC 29579 / DSM 644 / CCUG 34227 / NCIMB 8303 / VKM B-1760 / Hildenborough) (Desulfovibrio vulgaris).